The following is a 244-amino-acid chain: Protein crossbronx (244 aa).

One can recognise a UBC core domain in the interval 20 to 176 (QQEYKILAEY…VQENIKESKE (157 aa)). The tract at residues 209–244 (AGRSKQTEPSAQQGNGGHATGLSWVKEGEFKPLSIE) is disordered.

The protein belongs to the ubiquitin-conjugating enzyme family. FTS subfamily.

In Drosophila sechellia (Fruit fly), this protein is Protein crossbronx (cbx).